Consider the following 119-residue polypeptide: Small ribosomal subunit protein uS13 (119 aa).

The segment at 90–119 (IRHRRGLPLRGQRTRSNARTRKGKRKPIRS) is disordered. The segment covering 91 to 119 (RHRRGLPLRGQRTRSNARTRKGKRKPIRS) has biased composition (basic residues).

It belongs to the universal ribosomal protein uS13 family. As to quaternary structure, part of the 30S ribosomal subunit. Forms a loose heterodimer with protein S19. Forms two bridges to the 50S subunit in the 70S ribosome.

In terms of biological role, located at the top of the head of the 30S subunit, it contacts several helices of the 16S rRNA. In the 70S ribosome it contacts the 23S rRNA (bridge B1a) and protein L5 of the 50S subunit (bridge B1b), connecting the 2 subunits; these bridges are implicated in subunit movement. Contacts the tRNAs in the A and P-sites. The chain is Small ribosomal subunit protein uS13 from Coxiella burnetii (strain CbuK_Q154) (Coxiella burnetii (strain Q154)).